A 214-amino-acid polypeptide reads, in one-letter code: Transcription factor MYB24 (214 aa).

HTH myb-type domains lie at 14–66 and 67–121; these read DAEV…LNYL and RPDV…QKYI. DNA-binding regions (H-T-H motif) lie at residues 42-66 and 94-117; these read WNSLAKSAGLKRTGKSCRLRWLNYL and WSKIAKHLPGRTDNEIKNFWRTKI.

Interacts (via N-terminus) with TIFY10A/JAZ1, TIFY5A/JAZ8 AND TIFY3A/JAZ11. As to expression, expressed specifically in flowers. Expressed in all four whorls of the flower and in the vascular tissue of stamen filament and sepals. Detected in male and female gametophytes, especially in microspores and ovules. Weakly expressed in petals and the upper part of pistils.

It is found in the nucleus. Its function is as follows. Transcription factor acting redundantly with MYB21 and MYB57 to control stamen filament elongation in the late developed flowers. Contributes with MYB21 to induction of MYB108 by jasmonate. Repressed at the transcript levels by DELLA proteins. In Arabidopsis thaliana (Mouse-ear cress), this protein is Transcription factor MYB24 (MYB24).